The sequence spans 335 residues: Probable magnesium transporter NIPA1 (335 aa).

Topologically, residues 1–7 (MDQMSPD) are extracellular. The chain crosses the membrane as a helical span at residues 8 to 28 (NINGVILAVSSSIFIGSSFII). Residues 29–55 (KKKGLKKAGASGVRAGEGGYGYLKEPW) lie on the Cytoplasmic side of the membrane. The chain crosses the membrane as a helical span at residues 56-76 (WWAGMITMIVGEVANFAAYAF). Topologically, residues 77–79 (APA) are extracellular. Residues 80-100 (ILVTPLGALSIIFSAVLAHFI) form a helical membrane-spanning segment. At 101 to 104 (LKEK) the chain is on the cytoplasmic side. A helical transmembrane segment spans residues 105-125 (LHMFGILGCILCVVGSTTIVL). At 126-143 (HAPHEQKIESVKQIWQLA) the chain is on the extracellular side. Residues 144-164 (IEPGFLVYSAVIVIVVAILIF) traverse the membrane as a helical segment. At 165 to 179 (YYEPRYGKTHMIVYV) the chain is on the cytoplasmic side. Residues 180–200 (GICSLMGSLTVMSVKAVAIAI) traverse the membrane as a helical segment. The Extracellular portion of the chain corresponds to 201-212 (KLTFSGTNQFKY). The chain crosses the membrane as a helical span at residues 213-233 (FNTWIFILVVATCCILQINYL). The Cytoplasmic portion of the chain corresponds to 234–244 (NKALDTFNTAV). The helical transmembrane segment at 245–265 (ISPVYYVMFTTFTIIASMIMF) threads the bilayer. Over 266–272 (KDWASQS) the chain is Extracellular. Residues 273 to 293 (GLKIATELCGFVTILSGTFLL) form a helical membrane-spanning segment. Residues 294-335 (HKTKDMGNSASGRGSISMPTRDTPVFTNSGSGRSSSSDKVAS) lie on the Cytoplasmic side of the membrane. Positions 303 to 321 (ASGRGSISMPTRDTPVFTN) are enriched in polar residues. The segment at 303-335 (ASGRGSISMPTRDTPVFTNSGSGRSSSSDKVAS) is disordered. A compositionally biased stretch (low complexity) spans 322–335 (SGSGRSSSSDKVAS).

The protein belongs to the NIPA (TC 2.A.7) family. As to quaternary structure, homodimer.

The protein localises to the cell membrane. The protein resides in the early endosome. Its function is as follows. Acts as a Mg(2+) transporter. Can also transport other divalent cations such as Fe(2+), Sr(2+), Ba(2+), Mn(2+) and Co(2+) but to a much less extent than Mg(2+). The sequence is that of Probable magnesium transporter NIPA1 from Arabidopsis thaliana (Mouse-ear cress).